Consider the following 213-residue polypeptide: Probable GTP-binding protein EngB (213 aa).

The region spanning 30 to 204 (EGFEVAFAGR…YTVLAGWMEL (175 aa)) is the EngB-type G domain. GTP-binding positions include 38–45 (GRSNAGKS), 64–68 (GRTQL), 82–85 (DLPG), 149–152 (TKAD), and 182–185 (LFSA). Mg(2+)-binding residues include Ser-45 and Thr-66.

Belongs to the TRAFAC class TrmE-Era-EngA-EngB-Septin-like GTPase superfamily. EngB GTPase family. Mg(2+) is required as a cofactor.

Its function is as follows. Necessary for normal cell division and for the maintenance of normal septation. This chain is Probable GTP-binding protein EngB, found in Pseudomonas fluorescens (strain ATCC BAA-477 / NRRL B-23932 / Pf-5).